We begin with the raw amino-acid sequence, 808 residues long: Potassium transporter 5 (808 aa).

Topologically, residues 1–65 are cytoplasmic; that stretch reads MAEEVGETRG…NQVNWKKTLS (65 aa). Residues 66 to 86 traverse the membrane as a helical segment; it reads LTFQSIGVVYGDIGTSPLYVY. Residues 87 to 102 lie on the Extracellular side of the membrane; that stretch reads ESTFPDKIGSKEDILG. A helical transmembrane segment spans residues 103–123; sequence VLSLIIYTLVLLPMLKYVFIV. The Cytoplasmic segment spans residues 124–189; the sequence is LRANDNGDGG…EKMENSKNIK (66 aa). The chain crosses the membrane as a helical span at residues 190–210; that stretch reads ILLFLVTILGTSMVIGDGVLT. Residues 211–221 are Extracellular-facing; it reads PCISVLSAVSG. Residues 222–242 form a helical membrane-spanning segment; the sequence is IGSLGQDAVVGISIAILIVLF. Topologically, residues 243-251 are cytoplasmic; that stretch reads CAQRLGTDK. Residues 252–272 traverse the membrane as a helical segment; that stretch reads VGFSFAPIILLWFSFIGGIGL. The Extracellular portion of the chain corresponds to 273-302; the sequence is YNLFKYDVSVLRAFNPKYMFDYFKRNGKQG. The chain crosses the membrane as a helical span at residues 303 to 323; the sequence is WISLGGVVLAVTGTEAMFADL. Topologically, residues 324 to 327 are cytoplasmic; the sequence is GHFN. Residues 328 to 348 traverse the membrane as a helical segment; that stretch reads VQAIQISFSGIVFPALLCAYA. The Extracellular segment spans residues 349–379; that stretch reads GQAAYLTKFPDDVSKTFYKSIPDPLYWPTFV. Residues 380-400 traverse the membrane as a helical segment; the sequence is VAVAAAIIASQAMISGAFAII. Topologically, residues 401–424 are cytoplasmic; it reads SQSLSLGCFPRVKVIHTSAKYEGQ. The helical transmembrane segment at 425–445 threads the bilayer; that stretch reads VYIPEVNYILMIACIMVCLGF. Residues 446-456 lie on the Extracellular side of the membrane; the sequence is KTTEKIGNAYG. A helical membrane pass occupies residues 457 to 477; that stretch reads IAVVAVMVITTCMVTIIMLVV. Residues 478-482 are Cytoplasmic-facing; that stretch reads WRTKM. Residues 483–503 form a helical membrane-spanning segment; the sequence is IWIAFFFFGFICIEAVYLSSV. Residues 504 to 510 lie on the Extracellular side of the membrane; the sequence is LYKFKDG. The helical transmembrane segment at 511-531 threads the bilayer; sequence GFLPLAFSFFLMIIMGIWHYI. Residues 532-808 lie on the Cytoplasmic side of the membrane; that stretch reads HKERYMYELK…LLRVGMTYEI (277 aa). The interval 699-722 is disordered; the sequence is LQQPNPSRVSSGSIHSNSGIKSTK.

Belongs to the HAK/KUP transporter (TC 2.A.72.3) family. As to expression, expressed in the roots.

The protein resides in the cell membrane. The enzyme catalyses K(+)(in) = K(+)(out). Its function is as follows. High-affinity potassium transporter that functions under low potassium conditions. Involved in the positive regulation of salt tolerance under salt stress. The sequence is that of Potassium transporter 5 from Manihot esculenta (Cassava).